The chain runs to 91 residues: Cytochrome b-c1 complex subunit 6, mitochondrial (91 aa).

Residues 1–10 (MGLEDERKML) show a composition bias toward basic and acidic residues. The transit peptide at 1 to 13 (MGLEDERKMLTES) directs the protein to the mitochondrion. Residues 1 to 30 (MGLEDERKMLTESGDPEKEEEEEEELVDPL) are disordered. The segment covering 17–27 (EKEEEEEEELV) has biased composition (acidic residues). Intrachain disulfides connect cysteine 37-cysteine 81 and cysteine 53-cysteine 67. N6-acetyllysine is present on lysine 42. N6-acetyllysine is present on lysine 85.

The protein belongs to the UQCRH/QCR6 family. As to quaternary structure, component of the ubiquinol-cytochrome c oxidoreductase (cytochrome b-c1 complex, complex III, CIII), a multisubunit enzyme composed of 11 subunits. The complex is composed of 3 respiratory subunits cytochrome b, cytochrome c1 and Rieske protein UQCRFS1, 2 core protein subunits UQCRC1/QCR1 and UQCRC2/QCR2, and 6 low-molecular weight protein subunits UQCRH/QCR6, UQCRB/QCR7, UQCRQ/QCR8, UQCR10/QCR9, UQCR11/QCR10 and subunit 9, the cleavage product of Rieske protein UQCRFS1. The complex exists as an obligatory dimer and forms supercomplexes (SCs) in the inner mitochondrial membrane with NADH-ubiquinone oxidoreductase (complex I, CI) and cytochrome c oxidase (complex IV, CIV), resulting in different assemblies (supercomplex SCI(1)III(2)IV(1) and megacomplex MCI(2)III(2)IV(2)).

It localises to the mitochondrion inner membrane. Its function is as follows. Component of the ubiquinol-cytochrome c oxidoreductase, a multisubunit transmembrane complex that is part of the mitochondrial electron transport chain which drives oxidative phosphorylation. The respiratory chain contains 3 multisubunit complexes succinate dehydrogenase (complex II, CII), ubiquinol-cytochrome c oxidoreductase (cytochrome b-c1 complex, complex III, CIII) and cytochrome c oxidase (complex IV, CIV), that cooperate to transfer electrons derived from NADH and succinate to molecular oxygen, creating an electrochemical gradient over the inner membrane that drives transmembrane transport and the ATP synthase. The cytochrome b-c1 complex catalyzes electron transfer from ubiquinol to cytochrome c, linking this redox reaction to translocation of protons across the mitochondrial inner membrane, with protons being carried across the membrane as hydrogens on the quinol. In the process called Q cycle, 2 protons are consumed from the matrix, 4 protons are released into the intermembrane space and 2 electrons are passed to cytochrome c. This Macaca fascicularis (Crab-eating macaque) protein is Cytochrome b-c1 complex subunit 6, mitochondrial (UQCRH).